The primary structure comprises 142 residues: uncharacterized protein (142 aa).

The segment at 1–22 (MSGSVNQNTDQHSQDSSSTPNN) is disordered. 2 helical membrane-spanning segments follow: residues 63 to 83 (LFVMYMIVQVSYYIVPFVLLV) and 109 to 129 (IIDGIIGVLQFIFWFWIFVDL).

Its subcellular location is the membrane. This is an uncharacterized protein from Acanthamoeba polyphaga mimivirus (APMV).